Consider the following 122-residue polypeptide: Phospholipase A2 crotoxin basic subunit CBd (122 aa).

Cystine bridges form between C26-C115, C28-C44, C43-C95, C49-C122, C50-C88, C57-C81, and C75-C86. Ca(2+) contacts are provided by Y27, G29, and G31. The active site involves H47. D48 serves as a coordination point for Ca(2+). Residue D89 is part of the active site.

The protein belongs to the phospholipase A2 family. Group II subfamily. D49 sub-subfamily. In terms of assembly, heterodimer of one of the acidic (CA1, CA2, CA3 or CA4) and one of the basic (CBa1, CBa2, CBb, CBc or CBd) subunits; non-covalently linked. The acidic subunit is non-toxic, without enzymatic activity and comprises 3 peptides that are cross-linked by 5 disulfide bridges. The basic subunit is toxic, has phospholipase A2 activity and is composed of a single chain. Multiple variants of each subunit give different crotoxin complexes that can be subdivided into 2 classes: (1) those of high toxicity, low PLA2 activity (CBb, CBc and CBd linked with high affinity to any CA) and high stability (K(d)=4.5 nM) and (2) those of moderate toxicity, high PLA2 activity (CBa2 linked with low affinity to any CA) and low stability (K(d)=25 nM). Interacts with crotoxin inhibitor from Crotalus serum (CICS); the interaction leads to dissociation of the CA-CB heterodimer and to inhibition of PLA2 activity of the CB subunit. Interacts with human NBD1 domain of CFTR. Ca(2+) serves as cofactor. In terms of tissue distribution, expressed by the venom gland.

The protein resides in the secreted. It catalyses the reaction a 1,2-diacyl-sn-glycero-3-phosphocholine + H2O = a 1-acyl-sn-glycero-3-phosphocholine + a fatty acid + H(+). Functionally, heterodimer CA-CB: Crotoxin is a potent presynaptic neurotoxin that possesses phospholipase A2 (PLA2) activity and exerts a lethal action by blocking neuromuscular transmission. It consists of a non-covalent association of a basic and weakly toxic PLA2 subunit (CBa2, CBb, CBc, or CBd), with a small acidic, non-enzymatic and non-toxic subunit (CA1, CA2, CA3 or CA4). The complex acts by binding to a specific 48-kDa protein (R48) receptor located on presynaptic membranes, forming a transient ternary complex CA-CB-R48, followed by dissociation of the CA-CB complex and release of the CA subunit. At equilibrium, only the CB subunits remain associated with the specific crotoxin receptor. In addition to neurotoxicity, crotoxin has been found to exert myotoxicity, nephrotoxicity, and cardiovascular toxicity. Moreover, anti-inflammatory, immunomodulatory, anti-tumor and analgesic effects of crotoxin have also been reported. In terms of biological role, monomer CBd: The basic subunit of crotoxin is a snake venom phospholipase A2 (PLA2) that exhibits weak neurotoxicity (10-fold less than the heterodimer) and very strong anticoagulant effects by binding to factor Xa (F10) and inhibiting the prothrombinase activity. In addition, it shows the same effects described for the heterodimer and binds the nucleotide-binding domain (NBD1) of CFTR chloride channels and increases the channel current. PLA2 catalyzes the calcium-dependent hydrolysis of the 2-acyl groups in 3-sn-phosphoglycerides. In Crotalus durissus terrificus (South American rattlesnake), this protein is Phospholipase A2 crotoxin basic subunit CBd.